Here is a 1321-residue protein sequence, read N- to C-terminus: Insulin receptor substrate 2 (1321 aa).

The segment covering 1 to 10 (MASAPLPGPP) has biased composition (pro residues). 2 disordered regions span residues 1–32 (MASA…HSVR) and 51–73 (RGPG…PPRL). The PH domain occupies 16–144 (DGPNLNNNNN…WYRALTDLVS (129 aa)). Over residues 18-28 (PNLNNNNNNNN) the composition is skewed to low complexity. Residues 191–295 (YREVWQVNLK…EAMKALKELF (105 aa)) form the IRS-type PTB domain. The tract at residues 299–536 (PRSKSQSSGS…ARDGSGGELY (238 aa)) is disordered. Phosphoserine occurs at positions 303 and 343. Phosphothreonine is present on Thr-347. Ser-362 carries the post-translational modification Phosphoserine. The segment covering 364 to 376 (GDGGAAGGAGTAG) has biased composition (gly residues). Ser-381, Ser-385, and Ser-388 each carry phosphoserine. Arg-409 is modified (omega-N-methylarginine). Low complexity-rich tracts occupy residues 435 to 456 (SPPA…SGSY) and 478 to 490 (PSSG…GSPS). Thr-517 is subject to Phosphothreonine. At Ser-520 the chain carries Phosphoserine. The residue at position 524 (Thr-524) is a Phosphothreonine. Position 536 is a phosphotyrosine; by INSR (Tyr-536). Positions 536–539 (YGYM) match the YXXM motif 1 motif. Ser-556 carries the phosphoserine; by PLK1 modification. Ser-573 carries the phosphoserine modification. A phosphothreonine mark is found at Thr-575 and Thr-576. Ser-590 is modified (phosphoserine). Residues 594 to 597 (YTLM) carry the YXXM motif 2 motif. 2 positions are modified to phosphoserine: Ser-604 and Ser-616. Tyr-649 is subject to Phosphotyrosine. 2 short sequence motifs (YXXM motif) span residues 649–652 (YMPM) and 671–674 (YMPM). At Tyr-671 the chain carries Phosphotyrosine; by INSR. 4 positions are modified to phosphoserine: Ser-675, Ser-678, Ser-727, and Ser-728. The short motif at 734 to 737 (YMRM) is the YXXM motif 5 element. Residue Ser-762 is modified to Phosphoserine. At Thr-771 the chain carries Phosphothreonine. At Ser-796 the chain carries Phosphoserine. The short motif at 814 to 817 (YVLM) is the YXXM motif 6 element. Residue Ser-819 is modified to Phosphoserine. 2 disordered regions span residues 834-871 (ATPG…RPEG) and 888-1091 (EGLQ…ASPT). Position 907 is a phosphoserine (Ser-907). Tyr-911 bears the Phosphotyrosine; by INSR mark. Residues 930-959 (LLASAASSSSLLSASSPASSLGSGTPGTSS) show a composition bias toward low complexity. Ser-965 bears the Phosphoserine mark. Phosphotyrosine; by INSR is present on Tyr-970. The segment covering 1005-1014 (PYPPLPPRPS) has biased composition (pro residues). Polar residues predominate over residues 1039 to 1055 (AATSQGPTAGSSMSSEP). A YXXM motif 7 motif is present at residues 1061 to 1064 (YTEM). The residue at position 1071 (Thr-1071) is a Phosphothreonine. Residues 1072–1082 (PPQPIVAPPKP) show a composition bias toward pro residues. Residue Ser-1089 is modified to Phosphoserine. Ser-1098 carries the phosphoserine; by PLK1 modification. The interval 1110 to 1198 (LQVSQPPDPH…TSPGQAQPLV (89 aa)) is disordered. Over residues 1139–1154 (ETFSSTTTVTPVSPSF) the composition is skewed to low complexity. A Phosphothreonine modification is found at Thr-1148. 5 positions are modified to phosphoserine: Ser-1151, Ser-1163, Ser-1165, Ser-1175, and Ser-1190. Positions 1163-1179 (SASVENVSLRKSSEGSS) are enriched in polar residues. A Phosphotyrosine; by INSR modification is found at Tyr-1242. Residues 1251-1275 (QGSLAQSQPQPGDKNSWSRTRSLGG) form a disordered region. The span at 1253–1271 (SLAQSQPQPGDKNSWSRTR) shows a compositional bias: polar residues. Tyr-1303 is subject to Phosphotyrosine; by INSR. Residue Lys-1314 forms a Glycyl lysine isopeptide (Lys-Gly) (interchain with G-Cter in ubiquitin) linkage.

Interacts with PHIP. Interacts with SH2B1; this interaction enhances leptin-induced activation of the PI3-kinase pathway. Interacts with GRB2. Interacts with PIK3R1. Interacts with DVL2; this interaction promotes the Wnt/beta-catenin signaling pathway. Phosphorylation fluctuates in a cell-cycle dependent manner with hyperphosphorylation during mitosis. Phosphorylated at Ser-556 and Ser-1098 by PLK1; these phosphorylations prevent the activation of the PI3K pathway upon growth factor stimulation by inhibiting the binding between IRS2 and the PI3K pathway components and increasing the level of IRS2 protein degradation. In addition, they prevent premature mitotic exit. In terms of processing, monoubiquitinated by NEDD4; leading to enhanced IGF1 signaling. During cell cycle, ubiquitination and proteasomal degradation are controlled by FZR1. In terms of tissue distribution, skeletal muscle, lung, brain, liver, kidney, heart and spleen.

The protein resides in the cytoplasm. It localises to the cytosol. Signaling adapter protein that participates in the signal transduction from two prominent receptor tyrosine kinases, insulin receptor/INSR and insulin-like growth factor I receptor/IGF1R. Plays therefore an important role in development, growth, glucose homeostasis as well as lipid metabolism. Upon phosphorylation by the insulin receptor, functions as a signaling scaffold that propagates insulin action through binding to SH2 domain-containing proteins including the p85 regulatory subunit of PI3K, NCK1, NCK2, GRB2 or SHP2. Recruitment of GRB2 leads to the activation of the guanine nucleotide exchange factor SOS1 which in turn triggers the Ras/Raf/MEK/MAPK signaling cascade. Activation of the PI3K/AKT pathway is responsible for most of insulin metabolic effects in the cell, and the Ras/Raf/MEK/MAPK is involved in the regulation of gene expression and in cooperation with the PI3K pathway regulates cell growth and differentiation. Acts a positive regulator of the Wnt/beta-catenin signaling pathway through suppression of DVL2 autophagy-mediated degradation leading to cell proliferation. Plays a role in cell cycle progression by promoting a robust spindle assembly checkpoint (SAC) during M-phase. In macrophages, IL4-induced tyrosine phosphorylation of IRS2 leads to the recruitment and activation of phosphoinositide 3-kinase (PI3K). The polypeptide is Insulin receptor substrate 2 (Irs2) (Mus musculus (Mouse)).